The chain runs to 234 residues: Zinc finger FYVE domain-containing protein 21 (234 aa).

The segment at 44-104 (DKECPRCMQC…QCADCALVSH (61 aa)) adopts an FYVE-type zinc-finger fold. Residues Cys50, Cys53, Cys66, Cys69, Cys74, Cys77, Cys96, and Cys99 each coordinate Zn(2+). Positions 107-234 (AEFYDKQLKV…TKLLYESRDQ (128 aa)) are PH-like.

Interacts with PTK2/FAK1. As to expression, widely expressed.

The protein localises to the cell junction. Its subcellular location is the focal adhesion. It localises to the cytoplasmic vesicle. It is found in the endosome. Functionally, plays a role in cell adhesion, and thereby in cell motility which requires repeated formation and disassembly of focal adhesions. Regulates microtubule-induced PTK2/FAK1 dephosphorylation, an event important for focal adhesion disassembly, as well as integrin beta-1/ITGB1 cell surface expression. The polypeptide is Zinc finger FYVE domain-containing protein 21 (Zfyve21) (Mus musculus (Mouse)).